The primary structure comprises 105 residues: MADGSGWQPPRPCEAYRAEWKLCRSARHFLHHYYVHGERPACEQWQRDLASCRDWEERRNAEAQQSLCESERARVRAARKHILVWAPRQSPPPDWHLPLPQEKDE.

The protein belongs to the UPF0545 family. Interacts with RTN4 isoform A/Nogo-A; the interaction results in enhanced RTN4-mediated inhibition of AMPA receptor clustering. Also interacts with NCAM1, RANBP2 and CCT8. In terms of processing, rapidly degraded by proteolysis following neuronal stimulation, resulting in increased AMPA receptor clustering.

It is found in the synapse. It localises to the synaptic cleft. Its function is as follows. Negatively regulates long-term potentiation and modulates adult synaptic plasticity. Stabilizes the interaction of RTN4 isoform A/Nogo-A with its receptors, inhibiting clustering of postsynaptic AMPA receptors at synaptic sites. Upon neuronal stimulation, degraded at synapses, reducing RTN4 signaling and allowing AMPA receptor clustering at individual synapses. This chain is Synaptic plasticity regulator PANTS (C22orf39), found in Homo sapiens (Human).